The sequence spans 410 residues: Phosphoglycerate kinase (410 aa).

Residues 19 to 21 (DLN), R34, 57 to 60 (HQGK), R114, and R154 each bind substrate. Residues E332 and 358-361 (GGHS) contribute to the ATP site.

The protein belongs to the phosphoglycerate kinase family. Homodimer.

Its subcellular location is the cytoplasm. It catalyses the reaction (2R)-3-phosphoglycerate + ATP = (2R)-3-phospho-glyceroyl phosphate + ADP. It participates in carbohydrate degradation; glycolysis; pyruvate from D-glyceraldehyde 3-phosphate: step 2/5. The chain is Phosphoglycerate kinase (pgk) from Pyrococcus abyssi (strain GE5 / Orsay).